A 321-amino-acid chain; its full sequence is Cytoskeleton protein RodZ (321 aa).

Residues 1 to 111 (MNTEATHDQN…LGKRRKKRDG (111 aa)) lie on the Cytoplasmic side of the membrane. One can recognise an HTH cro/C1-type domain in the interval 19–71 (LRNAREQLGLSQQAVAERLCLKVSTVRDIEEDKAPSDLASTFLRGYIRSYARL). A DNA-binding region (H-T-H motif) is located at residues 30–49 (QQAVAERLCLKVSTVRDIEE). Residues 112-132 (WLMSFTWLVLFVVVGLTGAWW) traverse the membrane as a helical; Signal-anchor for type II membrane protein segment. Residues 133-321 (WQNHKAQQEE…TINAEPTSAQ (189 aa)) are Periplasmic-facing. Positions 167–190 (DTRAAASQDTTPAETAPAAPVDST) are disordered. A compositionally biased stretch (low complexity) spans 176–190 (TTPAETAPAAPVDST).

The protein belongs to the RodZ family.

The protein localises to the cell inner membrane. Its function is as follows. Cytoskeletal protein that is involved in cell-shape control through regulation of the length of the long axis. This Salmonella arizonae (strain ATCC BAA-731 / CDC346-86 / RSK2980) protein is Cytoskeleton protein RodZ.